Consider the following 910-residue polypeptide: E3 ubiquitin-protein ligase HUL5 (910 aa).

The residue at position 1 (M1) is an N-acetylmethionine. The interval 1 to 25 (MLNFTGQTRRRNVNLGNRTRNSKKD) is disordered. One can recognise an HECT domain in the interval 810–910 (YGGYKEEDQT…INSGARFDLS (101 aa)). The active-site Glycyl thioester intermediate is the C878.

The protein belongs to the UBE3C family. In terms of assembly, interacts with 19S proteasomes.

The protein localises to the cytoplasm. It is found in the cytosol. It localises to the nucleus. It carries out the reaction S-ubiquitinyl-[E2 ubiquitin-conjugating enzyme]-L-cysteine + [acceptor protein]-L-lysine = [E2 ubiquitin-conjugating enzyme]-L-cysteine + N(6)-ubiquitinyl-[acceptor protein]-L-lysine.. It participates in protein modification; protein ubiquitination. Functionally, non-essential E3 ubiquitin-protein ligase that specifically catalyzes 'Lys-29'- and 'Lys-48'-linked polyubiquitin chains. Accepts ubiquitin from an E2 ubiquitin-conjugating enzyme in the form of a thioester and then directly transfers the ubiquitin to targeted substrates. Associates with the proteasome and promotes elongation of ubiquitin chains on substrates bound to the proteasome. Elongation of ubiquitin chains on substrates bound to the proteasome promotes proteasomal processivity. Also promotes ubiquitin elongation of 26S proteasome subunit RPN10. Involved in the stress response required to maintain cell fitness following heat-shock: acts by mediating ubiquitination of cytosolic misfolded proteins, leading to their subsequent degradation. In Saccharomyces cerevisiae (strain ATCC 204508 / S288c) (Baker's yeast), this protein is E3 ubiquitin-protein ligase HUL5.